A 172-amino-acid polypeptide reads, in one-letter code: WW domain binding protein VOPP1 (172 aa).

Residues 1-22 (MARPLGRVAALLLGLLMECTEA) form the signal peptide. Residues 23-60 (KKHCWYFEGLYPTYYICRSYEDCCGSRCCVRALSIQRL) are Extracellular-facing. The chain crosses the membrane as a helical span at residues 61–81 (WYFWFLLMMGVLFCCGAGFFI). Topologically, residues 82–172 (RRRMYPPPLI…PPYEQVVKDK (91 aa)) are cytoplasmic. The disordered stretch occupies residues 139 to 172 (QVQPNSPHGGTTYPPPPSYCNTPPPPYEQVVKDK). The segment covering 151–165 (YPPPPSYCNTPPPPY) has biased composition (pro residues).

It belongs to the VOPP1/ECOP family. As to quaternary structure, interacts with WWOX (via WW domain).

It localises to the cytoplasmic vesicle membrane. The protein resides in the late endosome membrane. Its subcellular location is the lysosome membrane. In terms of biological role, increases the transcriptional activity of NFKB1 by facilitating its nuclear translocation, DNA-binding and associated apoptotic response, when overexpressed. May sequester WWOX in lysosomal vesicles and thereby regulate WWOX role as tumor suppressor. The polypeptide is WW domain binding protein VOPP1 (Rattus norvegicus (Rat)).